A 460-amino-acid polypeptide reads, in one-letter code: ATP synthase subunit beta (460 aa).

G150–T157 contributes to the ATP binding site.

It belongs to the ATPase alpha/beta chains family. As to quaternary structure, F-type ATPases have 2 components, CF(1) - the catalytic core - and CF(0) - the membrane proton channel. CF(1) has five subunits: alpha(3), beta(3), gamma(1), delta(1), epsilon(1). CF(0) has three main subunits: a(1), b(2) and c(9-12). The alpha and beta chains form an alternating ring which encloses part of the gamma chain. CF(1) is attached to CF(0) by a central stalk formed by the gamma and epsilon chains, while a peripheral stalk is formed by the delta and b chains.

It localises to the cell inner membrane. It catalyses the reaction ATP + H2O + 4 H(+)(in) = ADP + phosphate + 5 H(+)(out). Its function is as follows. Produces ATP from ADP in the presence of a proton gradient across the membrane. The catalytic sites are hosted primarily by the beta subunits. This Salmonella agona (strain SL483) protein is ATP synthase subunit beta.